The chain runs to 251 residues: Triosephosphate isomerase 1 (251 aa).

9–11 (NWK) lines the substrate pocket. His95 functions as the Electrophile in the catalytic mechanism. The Proton acceptor role is filled by Glu167. Residues Gly173, Ser213, and 234–235 (GG) each bind substrate.

Belongs to the triosephosphate isomerase family. Homodimer.

It localises to the cytoplasm. The catalysed reaction is D-glyceraldehyde 3-phosphate = dihydroxyacetone phosphate. Its pathway is carbohydrate biosynthesis; gluconeogenesis. It functions in the pathway carbohydrate degradation; glycolysis; D-glyceraldehyde 3-phosphate from glycerone phosphate: step 1/1. Its function is as follows. Involved in the gluconeogenesis. Catalyzes stereospecifically the conversion of dihydroxyacetone phosphate (DHAP) to D-glyceraldehyde-3-phosphate (G3P). The polypeptide is Triosephosphate isomerase 1 (Listeria monocytogenes serovar 1/2a (strain ATCC BAA-679 / EGD-e)).